A 383-amino-acid chain; its full sequence is Probable lipid transporter atnI (383 aa).

The next 2 helical transmembrane spans lie at 46 to 66 (VLFS…AIMF) and 71 to 91 (AWVV…RSLF). Residue asparagine 94 is glycosylated (N-linked (GlcNAc...) asparagine). Transmembrane regions (helical) follow at residues 104 to 124 (FTIF…MTLG), 144 to 164 (FGHI…VGAA), 182 to 202 (IYMG…GLFI), 231 to 251 (WLFY…IFRL), and 269 to 289 (WFEY…LNVA). The segment at 305-383 (VSRKEKKQRK…YDNRGNEVRP (79 aa)) is disordered. A compositionally biased stretch (basic residues) spans 307-316 (RKEKKQRKRE). A compositionally biased stretch (basic and acidic residues) spans 317 to 329 (KKEAKIAEKEAKK).

Belongs to the lipid-translocating exporter (LTE) (TC 9.A.26.1) family.

Its subcellular location is the membrane. The protein operates within secondary metabolite biosynthesis. Probable lipid transporter; part of the gene cluster that mediates the biosynthesis of aspercryptins, linear lipopeptides built from six amino acids including 2 highly unusual and nonproteogenic amino acids, 2-amino-octanoic acid (2aoa) and 2-amino-dodecanol (2adol). The core structure of aspercryptins is as follows: Ser/Ala-Thr-Ile/Val-2aoa-Asn-2adol. The first step of aspercryptin biosynthesis is the generation of the fatty acid precursors, octanoic and dodecanoic acids, by the FAS subunits atnF and atnM. The fatty acid precursors are likely transformed into the corresponding alpha-amino fatty acids in three steps. First, they are hydroxylated by the cytochrome P450 monooxygenase atnE, then oxidized to the corresponding alpha-keto acids by the NAD(P)-dependent oxidoreductase atnD, and finally converted to the alpha-amino fatty acids by the PLP-dependent aminotransferases atnH or atnJ. the alpha-amino fatty acids, 2-amino-octanoic and 2-amino-dodecanoic acids, are recognized, activated, and covalently tethered to the NRPS atnA by its fourth and sixth adenylation domains. The second module of atnA is the Thr module and contains an epimerase (E) domain responsible for the epimerization of Thr to D-allo-Thr. Additionally, despite atnA having only one epimerase domain, the first amino acid of aspercryptin A1 is D-Ser, suggesting that serine is either loaded directly as D-Ser on the first module or that the epimerase domain in the threonine module epimerizes both L-Ser and L-Thr. After condensation of the hexapeptide of aspercryptin, the C-terminal reductase (TE) domain might be involved in the reductive release and production of the aldehyde hexapeptide. Further reduction would generate aspercryptins. The variety of aspercryptins produced reflects the flexibility of the atnA NRPS, allowing incorporation of alanine instead of serine, valine for isoleucine, and a C10 fatty amino alcohol instead of the C12 version. AtnB seems to be involved in the selectivity for Ile versus Val by the third module. Moreover, type B, C and D aspercryptins have an additional N-terminal cichorine, acetyl and propionyl group respectively. The protein is Probable lipid transporter atnI of Emericella nidulans (strain FGSC A4 / ATCC 38163 / CBS 112.46 / NRRL 194 / M139) (Aspergillus nidulans).